A 215-amino-acid chain; its full sequence is Probable phosphoglycerate mutase GpmB (215 aa).

Substrate contacts are provided by residues 8 to 15 (RHGETQWN), 21 to 22 (QG), Arg58, Arg60, 82 to 85 (ELDM), 104 to 105 (RR), and 151 to 152 (GI). His9 (tele-phosphohistidine intermediate) is an active-site residue. Glu82 functions as the Proton donor/acceptor in the catalytic mechanism.

Belongs to the phosphoglycerate mutase family. GpmB subfamily.

It carries out the reaction (2R)-2-phosphoglycerate = (2R)-3-phosphoglycerate. It functions in the pathway carbohydrate degradation; glycolysis; pyruvate from D-glyceraldehyde 3-phosphate: step 3/5. The protein is Probable phosphoglycerate mutase GpmB of Citrobacter koseri (strain ATCC BAA-895 / CDC 4225-83 / SGSC4696).